The sequence spans 642 residues: Putative ATP-binding protein YdiF (642 aa).

2 consecutive ABC transporter domains span residues 4–259 (LQVN…EKDL) and 327–541 (LRVQ…ELEK). Residues 36-43 (GRNGAGKS) and 360-367 (GPNGIGKS) contribute to the ATP site. 2 stretches are compositionally biased toward basic and acidic residues: residues 541 to 550 (KMNQQEETDK) and 557 to 567 (SDSKRSYEEEK). The tract at residues 541 to 567 (KMNQQEETDKTPATVKSDSKRSYEEEK) is disordered.

The protein belongs to the ABC transporter superfamily. ABCF family. YdiF subfamily.

This Bacillus subtilis (strain 168) protein is Putative ATP-binding protein YdiF (ydiF).